Consider the following 349-residue polypeptide: Putative F-box/kelch-repeat protein At4g02310 (349 aa).

In terms of domain architecture, F-box spans 11–58; it reads SLFSLLPNDIVLNILARVPRWYHPILSCVSKNLRFLVSSSELKITRSL. The Kelch repeat unit spans residues 154-204; it reads KIYVFGGIDDMNKRYYEGIHAQVFDLKTQTWHVGPNLSVKLACLNRSVVTP.

This Arabidopsis thaliana (Mouse-ear cress) protein is Putative F-box/kelch-repeat protein At4g02310.